The sequence spans 76 residues: Defensin-like protein 163 (76 aa).

An N-terminal signal peptide occupies residues 1–27 (MAKLIYSYLFISMFVLSVLLALPNAEG). 4 disulfides stabilise this stretch: Cys33–Cys76, Cys43–Cys62, Cys48–Cys70, and Cys52–Cys72.

The protein belongs to the DEFL family.

The protein resides in the secreted. This chain is Defensin-like protein 163 (LCR24), found in Arabidopsis thaliana (Mouse-ear cress).